Consider the following 614-residue polypeptide: Vitamin B12 transporter BtuB (614 aa).

The signal sequence occupies residues 1–20 (MIKKASLLTACSVTAFSAWA). The TonB box motif lies at 26–33 (DTLVVTAN). The 115-residue stretch at 38-152 (PRSTVLAPTT…IGGVVNIITT (115 aa)) folds into the TBDR plug domain. Residues Leu-83, Ser-85, Asn-92, and 110 to 111 (GS) each bind cyanocob(III)alamin. A TBDR beta-barrel domain is found at 155-614 (EPGTEISAGW…EYTLSGSYTF (460 aa)). The next 3 beta stranded transmembrane spans lie at 158-165 (TEISAGWG), 169-178 (YQNYDVSTQQ), and 184-195 (TRVTLLGDYAHT). Residues Asp-199, Gln-211, Asp-213, and Asp-215 each contribute to the Ca(2+) site. Beta stranded transmembrane passes span 217–227 (FLSKTLYGALE) and 232–248 (DAWS…NRTN). Tyr-249 and Asp-250 together coordinate Ca(2+). Ala-251 contacts cyanocob(III)alamin. Asp-261 contributes to the Ca(2+) binding site. The next 14 membrane-spanning stretches (beta stranded) occupy residues 263-277 (RKLY…LRYN), 279-296 (ELIK…KDYN), 309-325 (TLDE…NNII), 328-337 (HGNVGAGVDW), 353-369 (YDQR…QQVG), 371-381 (FTFEGAARSDD), 385-400 (FGRH…WEFI), 403-417 (YRFI…KAPN), 434-443 (KSKQWEGAFE), 449-458 (VNWRISGYRN), 473-490 (YYNE…TANF), 494-509 (PLTH…ARNA), 517-529 (RRAK…QLDW), and 535-550 (DWGI…YDKD). Thr-309 is a cyanocob(III)alamin binding site. Residue Arg-517 coordinates cyanocob(III)alamin. Residue Tyr-551 participates in cyanocob(III)alamin binding. 3 beta stranded membrane-spanning segments follow: residues 558-572 (TVKM…LAVA), 585-596 (IANLFDKDYETV), and 602-614 (AGRE…SYTF). The short motif at 597–614 (YGYQTAGREYTLSGSYTF) is the TonB C-terminal box element.

Belongs to the TonB-dependent receptor family. BtuB (TC 1.B.14.3.1) subfamily.

The protein resides in the cell outer membrane. Its function is as follows. Involved in the active translocation of vitamin B12 (cyanocobalamin) across the outer membrane to the periplasmic space. It derives its energy for transport by interacting with the trans-periplasmic membrane protein TonB. The polypeptide is Vitamin B12 transporter BtuB (Escherichia coli O157:H7).